The following is a 185-amino-acid chain: Elongation factor P (185 aa).

The protein belongs to the elongation factor P family.

Its subcellular location is the cytoplasm. It functions in the pathway protein biosynthesis; polypeptide chain elongation. Involved in peptide bond synthesis. Stimulates efficient translation and peptide-bond synthesis on native or reconstituted 70S ribosomes in vitro. Probably functions indirectly by altering the affinity of the ribosome for aminoacyl-tRNA, thus increasing their reactivity as acceptors for peptidyl transferase. The sequence is that of Elongation factor P from Staphylococcus epidermidis (strain ATCC 35984 / DSM 28319 / BCRC 17069 / CCUG 31568 / BM 3577 / RP62A).